Here is a 393-residue protein sequence, read N- to C-terminus: Large ribosomal subunit protein uL2m (393 aa).

A mitochondrion-targeting transit peptide spans 1-43 (MLVLGSLRSALSCSSTASLISKRNPCYPYGILCRTLSQSVKLW). Positions 337–393 (AMNKCDHPHGGGRGKSKSNKLSMSPWGQLAKGYKTRRGKNQNRMKVKDRPRGKDARL) are disordered. Residues 369–380 (YKTRRGKNQNRM) are compositionally biased toward basic residues. Residues 381 to 393 (KVKDRPRGKDARL) show a composition bias toward basic and acidic residues.

Belongs to the universal ribosomal protein uL2 family. As to quaternary structure, component of the mitochondrial large ribosomal subunit (mt-LSU). Mature yeast 74S mitochondrial ribosomes consist of a small (37S) and a large (54S) subunit. The 37S small subunit contains a 15S ribosomal RNA (15S mt-rRNA) and 34 different proteins. The 54S large subunit contains a 21S rRNA (21S mt-rRNA) and 46 different proteins. uL2m has a Na/K ligand binding site.

It is found in the mitochondrion. Component of the mitochondrial ribosome (mitoribosome), a dedicated translation machinery responsible for the synthesis of mitochondrial genome-encoded proteins, including at least some of the essential transmembrane subunits of the mitochondrial respiratory chain. The mitoribosomes are attached to the mitochondrial inner membrane and translation products are cotranslationally integrated into the membrane. This Saccharomyces cerevisiae (strain ATCC 204508 / S288c) (Baker's yeast) protein is Large ribosomal subunit protein uL2m (RML2).